The primary structure comprises 398 residues: L-talarate/galactarate dehydratase (398 aa).

Substrate contacts are provided by residues 46–48 (DAK), 82–83 (KR), and K195. K197 functions as the Proton acceptor in the catalytic mechanism. D226 serves as a coordination point for Mg(2+). N228 is a substrate binding site. Mg(2+)-binding residues include E252 and E278. H328 serves as the catalytic Proton donor/acceptor. E348 is a binding site for substrate.

The protein belongs to the mandelate racemase/muconate lactonizing enzyme family. Homooctamer; tetramer of dimers. Requires Mg(2+) as cofactor.

It carries out the reaction L-altrarate = 5-dehydro-4-deoxy-D-glucarate + H2O. It catalyses the reaction galactarate = 5-dehydro-4-deoxy-D-glucarate + H2O. The catalysed reaction is L-altrarate = galactarate. Its activity is regulated as follows. Competitively inhibited by tartronate. Catalyzes the efficient dehydration of both L-talarate (also called L-altrarate) and galactarate to 5-keto-4-deoxy-D-glucarate (5-KDG). Also catalyzes the epimerization of L-talarate to galactarate; epimerization occurs in competition with dehydration. Is required for the utilization of L-talarate as a carbon source. Also functions in galactarate utilization. Is not active on other acid sugars. This chain is L-talarate/galactarate dehydratase, found in Salmonella typhimurium (strain LT2 / SGSC1412 / ATCC 700720).